The sequence spans 103 residues: Large ribosomal subunit protein uL24 (103 aa).

It belongs to the universal ribosomal protein uL24 family. In terms of assembly, part of the 50S ribosomal subunit.

One of two assembly initiator proteins, it binds directly to the 5'-end of the 23S rRNA, where it nucleates assembly of the 50S subunit. Its function is as follows. One of the proteins that surrounds the polypeptide exit tunnel on the outside of the subunit. This chain is Large ribosomal subunit protein uL24, found in Oceanobacillus iheyensis (strain DSM 14371 / CIP 107618 / JCM 11309 / KCTC 3954 / HTE831).